The chain runs to 338 residues: UDP-3-O-acylglucosamine N-acyltransferase (338 aa).

His243 acts as the Proton acceptor in catalysis.

This sequence belongs to the transferase hexapeptide repeat family. LpxD subfamily. Homotrimer.

The catalysed reaction is a UDP-3-O-[(3R)-3-hydroxyacyl]-alpha-D-glucosamine + a (3R)-hydroxyacyl-[ACP] = a UDP-2-N,3-O-bis[(3R)-3-hydroxyacyl]-alpha-D-glucosamine + holo-[ACP] + H(+). Its pathway is bacterial outer membrane biogenesis; LPS lipid A biosynthesis. In terms of biological role, catalyzes the N-acylation of UDP-3-O-acylglucosamine using 3-hydroxyacyl-ACP as the acyl donor. Is involved in the biosynthesis of lipid A, a phosphorylated glycolipid that anchors the lipopolysaccharide to the outer membrane of the cell. The polypeptide is UDP-3-O-acylglucosamine N-acyltransferase (Amoebophilus asiaticus (strain 5a2)).